Here is a 335-residue protein sequence, read N- to C-terminus: Transcription factor IIIA (335 aa).

9 C2H2-type zinc fingers span residues 13–37 (YICS…LCKH), 43–67 (FPCT…SMTH), 73–98 (CKCD…QRAH), 105–129 (YECY…QYIH), 135–159 (FKCN…EKVH), 162–188 (YPCQ…AASH), 192–214 (TICD…KRTH), 221–246 (YKCP…LSFH), and 252–276 (FACG…ANTH). Over residues 269–280 (LDRHANTHDPEK) the composition is skewed to basic and acidic residues. The disordered stretch occupies residues 269–335 (LDRHANTHDP…ATAMQNLSIK (67 aa)). Residues 281–292 (KKMKKPRPKKSL) are compositionally biased toward basic residues.

It localises to the nucleus. In terms of biological role, involved in ribosomal large subunit biogenesis. Interacts with the internal control region (ICR) of approximately 50 bases within the 5S RNA genes, is required for correct transcription of these genes by RNA polymerase III. Also binds the transcribed 5S RNA's. The protein is Transcription factor IIIA (gtf3a) of Lithobates pipiens (Northern leopard frog).